Here is a 232-residue protein sequence, read N- to C-terminus: tRNA (guanine-N(7)-)-methyltransferase (232 aa).

4 residues coordinate S-adenosyl-L-methionine: E63, E88, D115, and D137. D137 is a catalytic residue. Residues K141, D173, and 211 to 214 (TRYE) each bind substrate.

This sequence belongs to the class I-like SAM-binding methyltransferase superfamily. TrmB family.

The catalysed reaction is guanosine(46) in tRNA + S-adenosyl-L-methionine = N(7)-methylguanosine(46) in tRNA + S-adenosyl-L-homocysteine. Its pathway is tRNA modification; N(7)-methylguanine-tRNA biosynthesis. Functionally, catalyzes the formation of N(7)-methylguanine at position 46 (m7G46) in tRNA. The polypeptide is tRNA (guanine-N(7)-)-methyltransferase (Chelativorans sp. (strain BNC1)).